Here is a 328-residue protein sequence, read N- to C-terminus: Glyoxylate reductase/hydroxypyruvate reductase (328 aa).

A Phosphoserine modification is found at Ser-36. 83-84 (VG) contacts substrate. Residues 162-164 (GRI), 185-188 (RQPR), Ser-217, and Ile-243 contribute to the NADP(+) site. The substrate site is built by Arg-245 and Asp-269. Phosphoserine is present on Ser-272. Residue His-293 is the Proton donor of the active site. Substrate is bound at residue 293–296 (HIGS). An NADP(+)-binding site is contributed by Gly-295. Position 298 is a phosphothreonine (Thr-298).

It belongs to the D-isomer specific 2-hydroxyacid dehydrogenase family. Homodimer. Ubiquitous. Most abundantly expressed in the liver.

The catalysed reaction is glycolate + NADP(+) = glyoxylate + NADPH + H(+). The enzyme catalyses (R)-glycerate + NAD(+) = 3-hydroxypyruvate + NADH + H(+). It catalyses the reaction (R)-glycerate + NADP(+) = 3-hydroxypyruvate + NADPH + H(+). In terms of biological role, enzyme with hydroxy-pyruvate reductase, glyoxylate reductase and D-glycerate dehydrogenase enzymatic activities. Reduces hydroxypyruvate to D-glycerate, glyoxylate to glycolate, oxidizes D-glycerate to hydroxypyruvate. The sequence is that of Glyoxylate reductase/hydroxypyruvate reductase (GRHPR) from Homo sapiens (Human).